A 994-amino-acid chain; its full sequence is NACHT, LRR and PYD domains-containing protein 4 (994 aa).

Positions 1-94 constitute a Pyrin domain; that stretch reads MAASFFSDFG…CMKVMRERTG (94 aa). The 324-residue stretch at 149-472 folds into the NACHT domain; that stretch reads RTVIIQGPQG…FYLLKSHLDH (324 aa). 155–162 is a binding site for ATP; the sequence is GPQGIGKT. LRR repeat units follow at residues 637–660, 698–721, 722–745, 750–777, 806–833, 863–886, 920–943, and 949–972; these read SGHL…TWCN, YLSF…LNYP, AGNV…VLAG, NKKL…LCSP, NKSV…ALKH, NQNL…LLCR, SKTL…VLCE, and ECAL…LLTA.

The protein belongs to the NLRP family. In terms of assembly, interacts with CHUK/IKKA, inhibiting its kinase activity.

In terms of biological role, may be involved in inflammation and recognition of cytosolic pathogen-associated molecular patterns (PAMPs) not intercepted by membrane-bound receptors. Acts as a negative regulator of the type I interferon signaling pathway by serving as an adapter to promote DTX4-mediated ubiquitination of activated TBK1, and its subsequent degradation. Suppresses NF-kappaB induction by the cytokines TNFA and IL1B, suggesting that it operates at a point of convergence in these two cytokine signaling pathways. The sequence is that of NACHT, LRR and PYD domains-containing protein 4 from Homo sapiens (Human).